Consider the following 778-residue polypeptide: LPS-assembly protein LptD (778 aa).

The N-terminal stretch at Met1–Ala23 is a signal peptide.

It belongs to the LptD family. As to quaternary structure, component of the lipopolysaccharide transport and assembly complex. Interacts with LptE and LptA.

It localises to the cell outer membrane. In terms of biological role, together with LptE, is involved in the assembly of lipopolysaccharide (LPS) at the surface of the outer membrane. The sequence is that of LPS-assembly protein LptD from Actinobacillus pleuropneumoniae serotype 5b (strain L20).